The chain runs to 621 residues: UvrABC system protein C (621 aa).

In terms of domain architecture, GIY-YIG spans 11–90 (TTPGVYLYKD…IKKHRPRYNI (80 aa)). The 36-residue stretch at 200-235 (KELVELLQKDMLYASEALEFEKAATLRDQIQAIKHT) folds into the UVR domain.

This sequence belongs to the UvrC family. As to quaternary structure, interacts with UvrB in an incision complex.

The protein resides in the cytoplasm. The UvrABC repair system catalyzes the recognition and processing of DNA lesions. UvrC both incises the 5' and 3' sides of the lesion. The N-terminal half is responsible for the 3' incision and the C-terminal half is responsible for the 5' incision. This is UvrABC system protein C from Lawsonia intracellularis (strain PHE/MN1-00).